We begin with the raw amino-acid sequence, 381 residues long: Succinate--CoA ligase [ADP-forming] subunit beta (381 aa).

Residues 9–236 enclose the ATP-grasp domain; the sequence is KELLRVAGVP…ESSEAPSEVD (228 aa). ATP-binding positions include K45, 52–54, A94, and E99; that span reads GRG. The Mg(2+) site is built by N191 and D205. Residues N256 and 313–315 each bind substrate; that span reads GIT.

The protein belongs to the succinate/malate CoA ligase beta subunit family. As to quaternary structure, heterotetramer of two alpha and two beta subunits. Mg(2+) is required as a cofactor.

It catalyses the reaction succinate + ATP + CoA = succinyl-CoA + ADP + phosphate. It carries out the reaction GTP + succinate + CoA = succinyl-CoA + GDP + phosphate. It participates in carbohydrate metabolism; tricarboxylic acid cycle; succinate from succinyl-CoA (ligase route): step 1/1. Succinyl-CoA synthetase functions in the citric acid cycle (TCA), coupling the hydrolysis of succinyl-CoA to the synthesis of either ATP or GTP and thus represents the only step of substrate-level phosphorylation in the TCA. The beta subunit provides nucleotide specificity of the enzyme and binds the substrate succinate, while the binding sites for coenzyme A and phosphate are found in the alpha subunit. The sequence is that of Succinate--CoA ligase [ADP-forming] subunit beta from Gemmatimonas aurantiaca (strain DSM 14586 / JCM 11422 / NBRC 100505 / T-27).